The sequence spans 82 residues: Small ribosomal subunit protein bS16 (82 aa).

This sequence belongs to the bacterial ribosomal protein bS16 family.

The sequence is that of Small ribosomal subunit protein bS16 from Dehalococcoides mccartyi (strain ATCC BAA-2100 / JCM 16839 / KCTC 5957 / BAV1).